The primary structure comprises 70 residues: Alpha-conotoxin EIIB (70 aa).

A signal peptide spans Met1–Ser21. The propeptide occupies Phe22 to Arg51. Residue Gln52 is modified to Pyrrolidone carboxylic acid. At Pro54 the chain carries Hydroxyproline. 2 disulfides stabilise this stretch: Cys56/Cys62 and Cys57/Cys67. The residue at position 67 (Cys67) is a Cysteine amide.

In terms of tissue distribution, expressed by the venom duct.

The protein localises to the secreted. In terms of biological role, alpha-conotoxins bind to the nicotinic acetylcholine receptors (nAChR) and inhibit them. This peptide potently blocks muscular nicotinic acetylcholine receptor (CHRNA1-CHRNB1-CHRNG-CHRND), and has no effect on neuronal receptors. It is able to totally displace [125I]-Bgtx from the Torpedo receptor with an inhibition constant (Ki) of 2.2 and 0.7 nM. This is Alpha-conotoxin EIIB from Conus ermineus (Agate cone).